The chain runs to 222 residues: Peptide methionine sulfoxide reductase MsrA (222 aa).

Cysteine 60 is a catalytic residue.

The protein belongs to the MsrA Met sulfoxide reductase family.

It catalyses the reaction L-methionyl-[protein] + [thioredoxin]-disulfide + H2O = L-methionyl-(S)-S-oxide-[protein] + [thioredoxin]-dithiol. It carries out the reaction [thioredoxin]-disulfide + L-methionine + H2O = L-methionine (S)-S-oxide + [thioredoxin]-dithiol. Functionally, has an important function as a repair enzyme for proteins that have been inactivated by oxidation. Catalyzes the reversible oxidation-reduction of methionine sulfoxide in proteins to methionine. This Pseudomonas putida (strain ATCC 47054 / DSM 6125 / CFBP 8728 / NCIMB 11950 / KT2440) protein is Peptide methionine sulfoxide reductase MsrA.